A 152-amino-acid chain; its full sequence is ARL14 effector protein-like (152 aa).

Residues 1 to 21 (MNEQSEKNNSIQERHTDHSFP) are disordered.

The chain is ARL14 effector protein-like (ARL14EPL) from Homo sapiens (Human).